The primary structure comprises 506 residues: MGSCCSSQDGDGNGKATAGSTVDSHELSQSVKGKIKQPEPKPKPPPQVPPAQDVKYPIYVGKYDYDSRTDDDLSFKKGDLMYIISTDEGDWWFARSKDTAGKEGYIPSNYVAEYKSLDAEEWFFGQVKRVDAEKQLMMPFNNLGSFLIRDSDTTPGDFSLSVRDIDRVRHYRIKKLENGTYFVTRRLTFQSIQELVAYYTQQADGLCVNLKGPCMVMEKPQTAGLSKQANEEWEIEKKQIKLLRGLGAGQFGEVWEGLWNGTTSVAVKTLKPGTMSIEEFLEEASIMKQLRHPKLIQLYAVCTKEEPIYIVTELMKHGSLLEYLRGDGRSLKLPDLVDMCSQVASGMSYLEQQNYIHRDLAARNILVGEHKICKVADFGLARVIDEEIYEAKLGAKFPIKWTAPEAAMYSRFTIKSDVWSFGIVLYEVITYGRFPYPGMTNAQVLEQIQQSYRMPRPMGCPEKLYAIMMDCWREDPASRPTFETLSWQLEEFFTTGDDAGYKDMER.

2 stretches are compositionally biased toward polar residues: residues 1–10 and 18–31; these read MGSCCSSQDG and AGSTVDSHELSQSV. Residues 1–53 are disordered; that stretch reads MGSCCSSQDGDGNGKATAGSTVDSHELSQSVKGKIKQPEPKPKPPPQVPPAQD. In terms of domain architecture, SH3 spans 54 to 116; it reads VKYPIYVGKY…PSNYVAEYKS (63 aa). The region spanning 122-214 is the SH2 domain; that stretch reads WFFGQVKRVD…GLCVNLKGPC (93 aa). Residues 240–493 enclose the Protein kinase domain; it reads IKLLRGLGAG…TLSWQLEEFF (254 aa). ATP contacts are provided by residues 246 to 254 and Lys-268; that span reads LGAGQFGEV. The Proton acceptor role is filled by Asp-359.

Belongs to the protein kinase superfamily. Tyr protein kinase family.

It is found in the cytoplasm. It carries out the reaction L-tyrosyl-[protein] + ATP = O-phospho-L-tyrosyl-[protein] + ADP + H(+). The protein is Tyrosine-protein kinase isoform SRK4 (SRK1) of Spongilla lacustris (Freshwater sponge).